A 235-amino-acid polypeptide reads, in one-letter code: MPKHGKKYRSAAALVDRNKLYDPMEALELVKKTATANFDETIEVAYRLGVDVRHADQQIRGAVVLPGGTGKEVKVLVFAKGEKAKEAEAAGADYVGAEDLVAKIQEGWLDFDVAVATPDMMSLVGRLGRILGPRGLMPNPKTGTVTFDVANAIQEIKAGKVEYRTDKAGIVAAPIGKASFDVERLAANFRALTEALLRAKPAAAKGQYMKSVTISATMGPGIKVNPARLTATAEK.

Belongs to the universal ribosomal protein uL1 family. As to quaternary structure, part of the 50S ribosomal subunit.

Functionally, binds directly to 23S rRNA. The L1 stalk is quite mobile in the ribosome, and is involved in E site tRNA release. Its function is as follows. Protein L1 is also a translational repressor protein, it controls the translation of the L11 operon by binding to its mRNA. This Symbiobacterium thermophilum (strain DSM 24528 / JCM 14929 / IAM 14863 / T) protein is Large ribosomal subunit protein uL1.